The chain runs to 91 residues: UPF0250 protein PSPTO_4820 (91 aa).

This sequence belongs to the UPF0250 family.

This is UPF0250 protein PSPTO_4820 from Pseudomonas syringae pv. tomato (strain ATCC BAA-871 / DC3000).